A 142-amino-acid chain; its full sequence is HTH-type transcriptional repressor NsrR (142 aa).

In terms of domain architecture, HTH rrf2-type spans 2 to 129 (QLTSFTDYGL…DRHTLAELVE (128 aa)). The H-T-H motif DNA-binding region spans 28 to 51 (ITEVTQVYGVSRNHMVKIINQLSH). Positions 91, 96, and 102 each coordinate [2Fe-2S] cluster.

The cofactor is [2Fe-2S] cluster.

Nitric oxide-sensitive repressor of genes involved in protecting the cell against nitrosative stress. May require iron for activity. The protein is HTH-type transcriptional repressor NsrR of Proteus mirabilis (strain HI4320).